Here is a 116-residue protein sequence, read N- to C-terminus: Nitrogen regulatory PII-like protein (116 aa).

Belongs to the P(II) protein family. As to quaternary structure, needs to interact with NrgA in order to localize correctly to the membrane.

It is found in the cell membrane. Required for full induction of the nrgAB operon under conditions of ammonium limitation. This is Nitrogen regulatory PII-like protein (nrgB) from Bacillus subtilis (strain 168).